An 858-amino-acid polypeptide reads, in one-letter code: NEDD4-binding protein 1 (858 aa).

A disordered region spans residues T17–S37. Positions Q26–S37 are enriched in polar residues. The KH-like domain occupies K96 to E180. Disordered stretches follow at residues E262–V321 and Q388–E424. Residues R285–T316 are compositionally biased toward basic and acidic residues. Positions K389–N418 are enriched in polar residues. An RNase NYN domain is found at L598 to E750. Over residues S774 to A784 the composition is skewed to polar residues. The disordered stretch occupies residues S774–R823. The segment covering H785–D799 has biased composition (low complexity). The segment covering R804–R813 has biased composition (pro residues). The tract at residues R813–G858 is coCUN.

The protein belongs to the N4BP1 family.

The protein localises to the nucleus. It is found in the nucleolus. Its subcellular location is the PML body. Potent suppressor of cytokine production that acts as a regulator of innate immune signaling and inflammation. Acts as a key negative regulator of select cytokine and chemokine responses elicited by TRIF-independent Toll-like receptors (TLRs), thereby limiting inflammatory cytokine responses to minor insults. Has ribonuclease activity. The protein is NEDD4-binding protein 1 of Danio rerio (Zebrafish).